The following is a 54-amino-acid chain: Large ribosomal subunit protein bL33 (54 aa).

It belongs to the bacterial ribosomal protein bL33 family.

The chain is Large ribosomal subunit protein bL33 from Thermobifida fusca (strain YX).